The primary structure comprises 276 residues: Pantothenate synthetase (276 aa).

26–33 (MGYLHEGH) serves as a coordination point for ATP. His33 (proton donor) is an active-site residue. Gln57 is a (R)-pantoate binding site. Gln57 serves as a coordination point for beta-alanine. Residue 142 to 145 (GLKD) coordinates ATP. Residue Gln148 coordinates (R)-pantoate. ATP contacts are provided by residues Ile171 and 179–182 (KSSR).

The protein belongs to the pantothenate synthetase family. As to quaternary structure, homodimer.

The protein resides in the cytoplasm. The catalysed reaction is (R)-pantoate + beta-alanine + ATP = (R)-pantothenate + AMP + diphosphate + H(+). It functions in the pathway cofactor biosynthesis; (R)-pantothenate biosynthesis; (R)-pantothenate from (R)-pantoate and beta-alanine: step 1/1. Catalyzes the condensation of pantoate with beta-alanine in an ATP-dependent reaction via a pantoyl-adenylate intermediate. This Exiguobacterium sp. (strain ATCC BAA-1283 / AT1b) protein is Pantothenate synthetase.